A 135-amino-acid chain; its full sequence is Lymphocyte antigen 6 complex locus protein G6d (135 aa).

The signal sequence occupies residues 1-19 (MNSQLVGILLSALLGVALG). A UPAR/Ly6 domain is found at 22–121 (TRCYDCGGGP…ASSVTPLCIL (100 aa)). 5 disulfide bridges follow: cysteine 24-cysteine 48, cysteine 27-cysteine 35, cysteine 42-cysteine 76, cysteine 82-cysteine 101, and cysteine 102-cysteine 107. The O-linked (GalNAc...) threonine glycan is linked to threonine 68. Asparagine 108 is lipidated: GPI-anchor amidated asparagine. A propeptide spans 109–135 (SAVASSVTPLCILAAAVTTLAWLLPGL) (removed in mature form).

Homodimer. In terms of processing, O-glycosylated. In terms of tissue distribution, expressed in embryonic tissue and adult lung, kidney, brain, liver and spleen.

The protein localises to the cell membrane. Its subcellular location is the cell projection. The protein resides in the filopodium. This Mus musculus (Mouse) protein is Lymphocyte antigen 6 complex locus protein G6d (Ly6g6d).